Here is a 1112-residue protein sequence, read N- to C-terminus: DNA polymerase II large subunit (1112 aa).

It belongs to the archaeal DNA polymerase II family. Heterodimer of a large subunit and a small subunit.

The catalysed reaction is DNA(n) + a 2'-deoxyribonucleoside 5'-triphosphate = DNA(n+1) + diphosphate. The enzyme catalyses Exonucleolytic cleavage in the 3'- to 5'-direction to yield nucleoside 5'-phosphates.. In terms of biological role, possesses two activities: a DNA synthesis (polymerase) and an exonucleolytic activity that degrades single-stranded DNA in the 3'- to 5'-direction. Has a template-primer preference which is characteristic of a replicative DNA polymerase. This is DNA polymerase II large subunit from Cenarchaeum symbiosum (strain A).